Reading from the N-terminus, the 228-residue chain is Ornithine decarboxylase antizyme 1 (228 aa).

The disordered stretch occupies residues 17–55 (REKEGDKPSATIHASRTMPLLSLHSRGGSSSESSRVSLH). Residues 36–55 (LLSLHSRGGSSSESSRVSLH) are compositionally biased toward low complexity.

This sequence belongs to the ODC antizyme family. As to quaternary structure, interacts with ODC1 and thereby sterically blocks ODC homodimerization. Forms a ternary complex with PSMB4 and OAZ1 before PSMB4 is incorporated into the 20S proteasome. Interacts with AZIN2; this interaction disrupts the interaction between the antizyme and ODC1. Interacts with FAM171A1.

Its function is as follows. Ornithine decarboxylase (ODC) antizyme protein that negatively regulates ODC activity and intracellular polyamine biosynthesis and uptake in response to increased intracellular polyamine levels. Binds to ODC monomers, inhibiting the assembly of the functional ODC homodimer, and targets the monomers for ubiquitin-independent proteolytic destruction by the 26S proteasome. Triggers ODC degradation by inducing the exposure of a cryptic proteasome-interacting surface of ODC. Stabilizes AZIN2 by interfering with its ubiquitination. Also inhibits cellular uptake of polyamines by inactivating the polyamine uptake transporter. SMAD1/OAZ1/PSMB4 complex mediates the degradation of the CREBBP/EP300 repressor SNIP1. Involved in the translocation of AZIN2 from ER-Golgi intermediate compartment (ERGIC) to the cytosol. The protein is Ornithine decarboxylase antizyme 1 (OAZ1) of Homo sapiens (Human).